We begin with the raw amino-acid sequence, 362 residues long: MQNIFENCSYHSKYEPYFLNCTNTTNQCVLIQDVGIIQAIDFWANLCIPFTLFVIAFILNGYYLSILIPEFRKMNDTTKKQYIFVVSRGISSLSASSIMMVLRLLKMLSTSFTVYFLFFLIDDLSFYSLLGSYVGSTLLLYLATVRPIFYSIQISVRIVYKFALVNVLLAVVLAVTTAIFQAAEVSDGFFHCDVQHCQPIINIAMFVIIATSFLIPIITLTFVLVTLCFQKSRTQSIGNFTVDNSVYKSARTRLAWTLFTFTLISLTEMIPSSFLVNLRVEDTITICVNFYQADHLFIPAIMNSFQTLAWGIALIVDPLCALLFDPRIRKVWVEHVSRLSIIIGRSFEACCHSNLNKEIQDK.

The Extracellular segment spans residues M1 to C47. N-linked (GlcNAc...) asparagine glycosylation is found at N7, N20, and N23. The chain crosses the membrane as a helical span at residues I48 to I68. The Cytoplasmic segment spans residues P69 to Q81. Residues Y82–L102 traverse the membrane as a helical segment. Residues R103–S125 are Extracellular-facing. Residues F126–V145 traverse the membrane as a helical segment. Residues R146–K161 are Cytoplasmic-facing. The chain crosses the membrane as a helical span at residues F162 to A182. Topologically, residues A183–A204 are extracellular. The chain crosses the membrane as a helical span at residues M205–V225. Over T226–A255 the chain is Cytoplasmic. Residues W256–V276 traverse the membrane as a helical segment. Residues N277–H295 are Extracellular-facing. Residues L296–V316 traverse the membrane as a helical segment. The Cytoplasmic segment spans residues D317 to K362.

Belongs to the G-protein coupled receptor 1 family. B0244 subfamily.

Its subcellular location is the cell membrane. The sequence is that of Putative G-protein coupled receptor B0244.5 from Caenorhabditis elegans.